Here is a 526-residue protein sequence, read N- to C-terminus: Amino acid transporter AVT1E (526 aa).

The segment at 1-49 (MKQNETFDQEREDLYHTFDEEDEESQTESSVPSTPLSRNRSEDVPVPWP) is disordered. Residues 8–18 (DQEREDLYHTF) are compositionally biased toward basic and acidic residues. 11 helical membrane passes run 140 to 160 (SVLNGINVLCGVALLTMPYAV), 165 to 185 (WLGLFILFSFGIITFYTGILL), 212 to 232 (ILVSILLYVELYASCVEYIIM), 253 to 273 (LDSTQVFAITTTLIVLPTVWL), 278 to 298 (LLSYLSAGGVISSILLALCLF), 320 to 340 (IPVAIGIYGFGFGSHSVFPNI), 353 to 373 (VLLISFAFCTLFYIAVAVCGF), 397 to 417 (IAVWTAVVTPMTKYALTITPV), 436 to 456 (GVSMLFRTILVLSTLVVALTV), 458 to 478 (FFATVAALIGSFIAMLIALIF), and 494 to 514 (FQIGICILIVIIGIVSGCCGT).

Belongs to the amino acid/polyamine transporter 2 family. Amino acid/auxin permease (AAAP) (TC 2.A.18.5) subfamily.

It localises to the membrane. The chain is Amino acid transporter AVT1E from Arabidopsis thaliana (Mouse-ear cress).